The sequence spans 116 residues: Ribosome-binding factor A (116 aa).

Belongs to the RbfA family. In terms of assembly, monomer. Binds 30S ribosomal subunits, but not 50S ribosomal subunits or 70S ribosomes.

It localises to the cytoplasm. One of several proteins that assist in the late maturation steps of the functional core of the 30S ribosomal subunit. Associates with free 30S ribosomal subunits (but not with 30S subunits that are part of 70S ribosomes or polysomes). Required for efficient processing of 16S rRNA. May interact with the 5'-terminal helix region of 16S rRNA. This is Ribosome-binding factor A from Streptococcus agalactiae.